A 140-amino-acid polypeptide reads, in one-letter code: Ribosome-binding factor A (140 aa).

The interval 116–140 is disordered; sequence RERQERGEIPPGSDDAQNCHDDEPS.

Belongs to the RbfA family. As to quaternary structure, monomer. Binds 30S ribosomal subunits, but not 50S ribosomal subunits or 70S ribosomes.

It is found in the cytoplasm. Functionally, one of several proteins that assist in the late maturation steps of the functional core of the 30S ribosomal subunit. Associates with free 30S ribosomal subunits (but not with 30S subunits that are part of 70S ribosomes or polysomes). Required for efficient processing of 16S rRNA. May interact with the 5'-terminal helix region of 16S rRNA. This chain is Ribosome-binding factor A, found in Synechococcus sp. (strain WH7803).